The primary structure comprises 131 residues: Small ribosomal subunit protein bS6 (131 aa).

The interval 100–131 (SPMVKAKDERRSRDYSLEDANMDAEEAGDSEE) is disordered. Basic and acidic residues predominate over residues 104–115 (KAKDERRSRDYS). Over residues 119–131 (ANMDAEEAGDSEE) the composition is skewed to acidic residues.

This sequence belongs to the bacterial ribosomal protein bS6 family.

Its function is as follows. Binds together with bS18 to 16S ribosomal RNA. The chain is Small ribosomal subunit protein bS6 from Photorhabdus laumondii subsp. laumondii (strain DSM 15139 / CIP 105565 / TT01) (Photorhabdus luminescens subsp. laumondii).